A 442-amino-acid chain; its full sequence is N-acetyl-S-alkylcysteine sulfoxide monooxygenase (442 aa).

FMN-binding residues include aspartate 58, threonine 95, histidine 145, tyrosine 149, serine 219, and serine 220.

Belongs to the NtaA/SnaA/DszA monooxygenase family. In terms of assembly, homodimer.

The enzyme catalyses (R)-N-acetyl-S-benzyl-L-cysteine sulfoxide + FMNH2 + O2 = N-acetyl-S-hydroxy-L-cysteine + benzaldehyde + FMN + H2O + H(+). It participates in amino-acid metabolism. In terms of biological role, involved in a cysteine salvage pathway from S-alkylcysteine. Catalyzes the C-S bond cleavage in N-acetyl-S-benzyl-L-cysteine sulfoxide leading to N-acetyl-S-hydroxy-L-cysteine and benzaldehyde. This pathway is likely important in the catabolism of alkylated cysteine generated by proteolysis of alkylated glutathione formed in the detoxification of a wide range of electrophiles. Has much less efficient activity with N-acetyl-S-methyl-L-cysteine sulfoxide as substrate. Cannot use S-alkylated L-cysteine sulfones and ketone analogs as substrates, demonstrating that the sulfoxide is required for activity. In Bacillus subtilis (strain 168), this protein is N-acetyl-S-alkylcysteine sulfoxide monooxygenase.